Here is a 747-residue protein sequence, read N- to C-terminus: Elastin (747 aa).

The signal sequence occupies residues 1-26 (MRSLTAAARRPEVLLLLLCILQPSQP). 3 positions are modified to 4-hydroxyproline: P34, P65, and P87. Residues K105 and K109 each carry the allysine modification. A 4-hydroxyproline mark is found at P165, P178, and P181. The residue at position 188 (P188) is a Hydroxyproline. Position 201 is a 4-hydroxyproline (P201). K252, K271, and K275 each carry allysine. 2 positions are modified to 4-hydroxyproline: P298 and P302. Allysine occurs at positions 324 and 327. A 4-hydroxyproline mark is found at P335, P365, P370, P375, P380, and P385. An allysine mark is found at K400, K404, K407, K445, and K448. A 4-hydroxyproline mark is found at P462 and P478. Allysine is present on residues K489 and K493. P513 carries the post-translational modification 4-hydroxyproline. Residues K544, K548, and K552 each carry the allysine modification. Residues P566, P575, P584, P593, and P599 each carry the 4-hydroxyproline modification. 2 positions are modified to allysine: K606 and K609. At P630 the chain carries 4-hydroxyproline. 4 positions are modified to allysine: K645, K649, K685, and K688. Residues P719 and P733 each carry the 4-hydroxyproline modification. A disulfide bridge connects residues C737 and C742.

It belongs to the elastin family. As to quaternary structure, the polymeric elastin chains are cross-linked together into an extensible 3D network. Forms a ternary complex with BGN and MFAP2. Interacts with MFAP2 via divalent cations (calcium &gt; magnesium &gt; manganese) in a dose-dependent and saturating manner. Interacts with FBLN5 and FBN1. Forms a ternary complex with FBN1 and FBLN2 or FBLN5. Interacts with MFAP4 in a Ca (2+)-dependent manner; this interaction promotes ELN self-assembly. Interacts with EFEMP2 with moderate affinity. In terms of processing, elastin is formed through the cross-linking of its soluble precursor tropoelastin. Cross-linking is initiated through the action of lysyl oxidase on exposed lysines to form allysine. Subsequent spontaneous condensation reactions with other allysine or unmodified lysine residues result in various bi-, tri-, and tetrafunctional cross-links. The most abundant cross-links in mature elastin fibers are lysinonorleucine, allysine aldol, desmosine, and isodesmosine. Post-translationally, hydroxylation on proline residues within the sequence motif, GXPG, is most likely to be 4-hydroxy as this fits the requirement for 4-hydroxylation in vertebrates.

Its subcellular location is the secreted. The protein localises to the extracellular space. The protein resides in the extracellular matrix. Its function is as follows. Major structural protein of tissues such as aorta and nuchal ligament, which must expand rapidly and recover completely. Molecular determinant of the late arterial morphogenesis, stabilizing arterial structure by regulating proliferation and organization of vascular smooth muscle. The chain is Elastin (ELN) from Bos taurus (Bovine).